A 228-amino-acid chain; its full sequence is Vacuolar-sorting protein snf7 (228 aa).

Coiled coils occupy residues 25 to 94 (ILGL…QINA) and 125 to 226 (EKVD…QAEM).

It belongs to the SNF7 family. In terms of assembly, a component of the endosomal sorting required for transport complex III (ESCRT-III).

Its subcellular location is the cytoplasm. The protein resides in the endosome membrane. In terms of biological role, required for the sorting and concentration of proteins resulting in the entry of these proteins into the invaginating vesicles of the multivesicular body (MVB). Also required for the proteolytic cleavage of the transcription factor pacc-1 in response to alkaline ambient pH. The sequence is that of Vacuolar-sorting protein snf7 (vsp-3) from Neurospora crassa (strain ATCC 24698 / 74-OR23-1A / CBS 708.71 / DSM 1257 / FGSC 987).